Here is a 354-residue protein sequence, read N- to C-terminus: Guanine nucleotide-binding protein G(t) subunit alpha-2 (354 aa).

Residues M1 to D28 are disordered. G2 carries N-myristoyl glycine lipidation. A compositionally biased stretch (basic and acidic residues) spans A7–D28. The 323-residue stretch at K32–F354 folds into the G-alpha domain. A G1 motif region spans residues K35 to T48. GTP is bound by residues G40 to S47, L175 to T181, D200 to Q204, N269 to D272, and A326. Mg(2+)-binding residues include S47 and T181. Residues D173 to T181 form a G2 motif region. The segment at F196–R205 is G3 motif. Residues V265–D272 are G4 motif. A G5 motif region spans residues T324–T329.

It belongs to the G-alpha family. G(i/o/t/z) subfamily. G proteins are composed of 3 units; alpha, beta and gamma. The alpha chain contains the guanine nucleotide binding site. In the retina, expressed in the rod photoreceptors.

It is found in the cell projection. Its subcellular location is the cilium. The protein resides in the photoreceptor outer segment. The protein localises to the photoreceptor inner segment. Its function is as follows. Guanine nucleotide-binding proteins (G proteins) are involved as modulators or transducers in various transmembrane signaling systems. Transducin is an amplifier and one of the transducers of a visual impulse that performs the coupling between rhodopsin and cGMP-phosphodiesterase. The chain is Guanine nucleotide-binding protein G(t) subunit alpha-2 (Gnat2) from Mus musculus (Mouse).